The following is a 468-amino-acid chain: Protein NEN1 (468 aa).

One can recognise an Exonuclease domain in the interval 11 to 172 (FFDVETTVPK…DDVRMNLEVL (162 aa)). The Mg(2+) site is built by D13 and E15. The Proton donor/acceptor role is filled by H159. D164 serves as a coordination point for Mg(2+).

The cofactor is Mg(2+). As to expression, expressed in the sieve elements and phloem pole pericycle cells.

It is found in the cytoplasm. The protein localises to the nucleus. Its function is as follows. Probable exonuclease involved in enuclation of sieve elements. The chain is Protein NEN1 from Arabidopsis thaliana (Mouse-ear cress).